Consider the following 101-residue polypeptide: Citrate lyase acyl carrier protein (101 aa).

Position 14 is an O-(phosphoribosyl dephospho-coenzyme A)serine (Ser-14).

This sequence belongs to the CitD family. As to quaternary structure, oligomer with a subunit composition of (alpha,beta,gamma)6.

The protein localises to the cytoplasm. Functionally, covalent carrier of the coenzyme of citrate lyase. This chain is Citrate lyase acyl carrier protein, found in Streptococcus uberis (strain ATCC BAA-854 / 0140J).